We begin with the raw amino-acid sequence, 447 residues long: MSEASNKQMKLIKRLSDELVECILSFLPVQSTLQHRVLSKRYRDTWKLSRDLDFSGIFSVRRSQSEAVRIIEDVFIQHQGPEIDRFVLSLDHTGVEDKILSWVDTCLRKNIKELVLDFSSSKKVMEIPLNFSSSETLTVLKLQWCRFEIPNNLPKGLRLLKTLSLMRTEVTNEMIDSIFNNCIHLESLELVKCQMSGNGILTIYAHDHKKFKSLVVSCMPNLLSIFLDAPTLECYKYDGYAKTINVLKVNALEEAEFHYSRSKRRHSSDTVVDSMLACSAVHALTTTNILLEAITYRYLKGKLEKPLFKFENLREFKIFFKAPTFCTLFDIAEFLKECPKLEQFIIDIQNFTFEPQMYFWEIHHKAQIQNTSNNNYLLKCLTDVKIIGYKGHWHELDIVEFFVKNAPSLKRLELQMPKNAKNDAHTPDVARIKLIKTIFSGVKVTEV.

In terms of domain architecture, F-box spans 10–57; it reads KLIKRLSDELVECILSFLPVQSTLQHRVLSKRYRDTWKLSRDLDFSGI. The 33-residue stretch at 384–416 folds into the FBD domain; it reads VKIIGYKGHWHELDIVEFFVKNAPSLKRLELQM.

The polypeptide is Putative FBD-associated F-box protein At1g61330 (Arabidopsis thaliana (Mouse-ear cress)).